The chain runs to 84 residues: uncharacterized protein (84 aa).

Residues 10 to 32 (AFSLAYYIIIHLLCLSYIYEIIH) form a helical membrane-spanning segment.

The protein localises to the membrane. This is an uncharacterized protein from Saccharomyces cerevisiae (strain ATCC 204508 / S288c) (Baker's yeast).